The primary structure comprises 371 residues: Anhydro-N-acetylmuramic acid kinase (371 aa).

15–22 (GTSLDGVD) serves as a coordination point for ATP.

This sequence belongs to the anhydro-N-acetylmuramic acid kinase family.

The catalysed reaction is 1,6-anhydro-N-acetyl-beta-muramate + ATP + H2O = N-acetyl-D-muramate 6-phosphate + ADP + H(+). It functions in the pathway amino-sugar metabolism; 1,6-anhydro-N-acetylmuramate degradation. Its pathway is cell wall biogenesis; peptidoglycan recycling. Catalyzes the specific phosphorylation of 1,6-anhydro-N-acetylmuramic acid (anhMurNAc) with the simultaneous cleavage of the 1,6-anhydro ring, generating MurNAc-6-P. Is required for the utilization of anhMurNAc either imported from the medium or derived from its own cell wall murein, and thus plays a role in cell wall recycling. The sequence is that of Anhydro-N-acetylmuramic acid kinase from Cereibacter sphaeroides (strain ATCC 17023 / DSM 158 / JCM 6121 / CCUG 31486 / LMG 2827 / NBRC 12203 / NCIMB 8253 / ATH 2.4.1.) (Rhodobacter sphaeroides).